We begin with the raw amino-acid sequence, 266 residues long: F-actin-capping protein subunit alpha (266 aa).

It belongs to the F-actin-capping protein alpha subunit family. As to quaternary structure, heterodimer of an alpha and a beta subunit.

It localises to the cytoplasm. It is found in the cytoskeleton. Functionally, F-actin-capping proteins bind in a Ca(2+)-independent manner to the fast growing ends of actin filaments (barbed end) thereby blocking the exchange of subunits at these ends. Unlike other capping proteins (such as gelsolin and severin), these proteins do not sever actin filaments. This Debaryomyces hansenii (strain ATCC 36239 / CBS 767 / BCRC 21394 / JCM 1990 / NBRC 0083 / IGC 2968) (Yeast) protein is F-actin-capping protein subunit alpha (CAP1).